Reading from the N-terminus, the 67-residue chain is uncharacterized protein (67 aa).

A signal peptide spans 1-28; that stretch reads MSHVSVIAARLLVWVGILLCLGVPQLWA. A glycan (N-linked (GlcNAc...) asparagine; by host) is linked at N39.

This is an uncharacterized protein from Invertebrate iridescent virus 3 (IIV-3).